The chain runs to 1046 residues: Translation initiation factor IF-2 (1046 aa).

The tract at residues 49–448 is disordered; sequence EAFPAEGSAP…MGAMVPRGNG (400 aa). Residues 52–71 show a composition bias toward low complexity; sequence PAEGSAPSSRPGGRPGNGAR. A compositionally biased stretch (pro residues) spans 94–111; that stretch reads RPGPGGRPVPGRPGPAPL. Low complexity-rich tracts occupy residues 112–139 and 147–159; these read PGASRPSTPTAAPQSQPAQTQPPQSQPV and PRPAAAAASAAAP. Pro residues predominate over residues 160 to 176; that stretch reads APAPSAPAPAPSAPAPA. Low complexity predominate over residues 177–187; sequence PITSAPTAATP. Over residues 188-206 the composition is skewed to pro residues; sequence PAAPQRPTPGGPRPGPAAP. The segment covering 210-222 has biased composition (gly residues); that stretch reads RTGGPGGPGGPGG. The span at 223 to 235 shows a compositional bias: pro residues; it reads GPRPGPRPGPRPA. The segment covering 244-253 has biased composition (low complexity); it reads SPAAGPRAAS. Composition is skewed to pro residues over residues 260-281 and 304-314; these read SAPPRPGAPRPGGPRPGGPRPG and RPTPGQMPPRP. Positions 320–333 are enriched in low complexity; sequence PRPNSNMFQPRPAG. Positions 334-414 are enriched in gly residues; it reads GAPGRPGGGG…AGAFGPGGRG (81 aa). Positions 415 to 426 are enriched in basic residues; sequence RPGRQRKSKRAK. The 173-residue stretch at 539 to 711 folds into the tr-type G domain; the sequence is ARPPVVTVMG…VILTADASLD (173 aa). Positions 548–555 are G1; that stretch reads GHVDHGKT. 548 to 555 is a binding site for GTP; it reads GHVDHGKT. The interval 573 to 577 is G2; it reads GITQH. A G3 region spans residues 598–601; that stretch reads DTPG. Residues 598–602 and 652–655 each bind GTP; these read DTPGH and NKVD. Positions 652-655 are G4; the sequence is NKVD. The interval 688–690 is G5; it reads SAR.

This sequence belongs to the TRAFAC class translation factor GTPase superfamily. Classic translation factor GTPase family. IF-2 subfamily.

It localises to the cytoplasm. Functionally, one of the essential components for the initiation of protein synthesis. Protects formylmethionyl-tRNA from spontaneous hydrolysis and promotes its binding to the 30S ribosomal subunits. Also involved in the hydrolysis of GTP during the formation of the 70S ribosomal complex. The sequence is that of Translation initiation factor IF-2 from Parafrankia sp. (strain EAN1pec).